Here is a 192-residue protein sequence, read N- to C-terminus: ADP-ribosylation factor-like protein 14 (192 aa).

The N-myristoyl glycine moiety is linked to residue glycine 2. Residues 20 to 27, 64 to 68, and 123 to 126 each bind GTP; these read GLDSAGKS, DVGGQ, and NKQD.

This sequence belongs to the small GTPase superfamily. Arf family. Interacts with ARL14EP. In terms of tissue distribution, expressed in immature dendritic cells.

It localises to the cytoplasmic vesicle. Functionally, GTPase that recruits MYO1E to MHC class II-containing vesicles via the effector protein ARL14EP and hence controls the movement of these vesicles along the actin cytoskeleton in dendritic cells. This Homo sapiens (Human) protein is ADP-ribosylation factor-like protein 14 (ARL14).